The following is a 180-amino-acid chain: MNPAPNLVMIGPMGAGKSCIGRRLAERFGLDFVDVDQAIVEQVGSSIPAIFEQHGEARFRQHEAEALHGLLAQSNKLVSTGGGAILDAGNRQRIRERGFVVYLHVSVPAQLTRLARDRNRPLLQRPDREQVLHGMAALRTPLYQEVADLTLETDHLSPAEATAQLVLRLAAQWRMSSTPA.

14–19 lines the ATP pocket; it reads GAGKSC. A Mg(2+)-binding site is contributed by Ser18. Substrate is bound by residues Asp36, Arg60, and Gly82. Arg120 contacts ATP. Residue Arg139 coordinates substrate.

The protein belongs to the shikimate kinase family. As to quaternary structure, monomer. Requires Mg(2+) as cofactor.

The protein resides in the cytoplasm. The catalysed reaction is shikimate + ATP = 3-phosphoshikimate + ADP + H(+). Its pathway is metabolic intermediate biosynthesis; chorismate biosynthesis; chorismate from D-erythrose 4-phosphate and phosphoenolpyruvate: step 5/7. Its function is as follows. Catalyzes the specific phosphorylation of the 3-hydroxyl group of shikimic acid using ATP as a cosubstrate. The chain is Shikimate kinase from Xanthomonas campestris pv. campestris (strain 8004).